A 79-amino-acid chain; its full sequence is Protein FAM236A (79 aa).

It belongs to the FAM236 family.

The polypeptide is Protein FAM236A (Homo sapiens (Human)).